We begin with the raw amino-acid sequence, 87 residues long: Serine rich endogenous peptide 17 (87 aa).

A signal peptide spans 1–28 (MTGKAPFFVILIAALLLLSSFFFGEVKA). Positions 32–87 (KQPKHRKLGNREGDENRSNEIVVQMKARVKRSKSKRGPQKKEPYKKPPCSPPTHPA) are disordered. The span at 40–49 (GNREGDENRS) shows a compositional bias: basic and acidic residues. Positions 51–71 (EIVVQMKARVKRSKSKRGPQK) match the SCOOP motif motif. Over residues 58–69 (ARVKRSKSKRGP) the composition is skewed to basic residues. The short motif at 63–65 (SKS) is the SxS motif essential for MIK2 binding element. Residues 77-87 (KPPCSPPTHPA) are compositionally biased toward pro residues.

It belongs to the serine rich endogenous peptide (SCOOP) phytocytokine family. As to quaternary structure, interacts with MIK2 (via extracellular leucine-rich repeat domain); this interaction triggers the formation of complex between MIK2 and the BAK1/SERK3 and SERK4 coreceptors, and subsequent BAK1 activation by phosphorylation.

Its subcellular location is the cell membrane. It localises to the secreted. The protein localises to the extracellular space. It is found in the apoplast. In terms of biological role, brassicaceae-specific phytocytokine (plant endogenous peptide released into the apoplast) perceived by MIK2 in a BAK1/SERK3 and SERK4 coreceptors-dependent manner, that modulates various physiological and antimicrobial processes including growth prevention and reactive oxygen species (ROS) response regulation. This is Serine rich endogenous peptide 17 from Arabidopsis thaliana (Mouse-ear cress).